Here is a 449-residue protein sequence, read N- to C-terminus: L-lysine-epsilon aminotransferase (449 aa).

Positions 128 and 129 each coordinate pyridoxal 5'-phosphate. Residues Arg170 and Gln274 each coordinate 2-oxoglutarate. Arg170 provides a ligand contact to L-lysine. Gln274 contacts pyridoxal 5'-phosphate. At Lys300 the chain carries N6-(pyridoxal phosphate)lysine. Arg422 provides a ligand contact to 2-oxoglutarate.

It belongs to the class-III pyridoxal-phosphate-dependent aminotransferase family. Requires pyridoxal 5'-phosphate as cofactor.

The catalysed reaction is L-lysine + 2-oxoglutarate = (S)-2-amino-6-oxohexanoate + L-glutamate. Catalyzes the transfer of the terminal amino group of L-lysine to alpha-ketoglutarate to yield L-glutamate and 2-aminoadipate 6-semialdehyde ((S)-2-amino-6-oxohexanoate), which is spontaneously converted to the dehydrated form 1-piperideine 6-carboxylate. The protein is L-lysine-epsilon aminotransferase of Mycobacterium bovis (strain ATCC BAA-935 / AF2122/97).